We begin with the raw amino-acid sequence, 247 residues long: Probable transcriptional regulatory protein YebC (247 aa).

Residues 1 to 20 (MAGHSKWANTRHRKAAQDAK) form a disordered region.

This sequence belongs to the TACO1 family.

The protein resides in the cytoplasm. This is Probable transcriptional regulatory protein YebC from Salmonella arizonae (strain ATCC BAA-731 / CDC346-86 / RSK2980).